We begin with the raw amino-acid sequence, 425 residues long: 26S proteasome regulatory subunit 7 (425 aa).

Position 208-215 (208-215 (GPPGTGKT)) interacts with ATP.

Belongs to the AAA ATPase family.

It is found in the cytoplasm. The protein localises to the nucleus. Its function is as follows. The 26S proteasome is involved in the ATP-dependent degradation of ubiquitinated proteins. The regulatory (or ATPase) complex confers ATP dependency and substrate specificity to the 26S complex. The polypeptide is 26S proteasome regulatory subunit 7 (RPT1) (Prunus persica (Peach)).